The sequence spans 304 residues: Non-specific ribonucleoside hydrolase RihC (304 aa).

His233 is an active-site residue.

Belongs to the IUNH family. RihC subfamily.

Hydrolyzes both purine and pyrimidine ribonucleosides with a broad-substrate specificity. The polypeptide is Non-specific ribonucleoside hydrolase RihC (Shigella sonnei (strain Ss046)).